The sequence spans 202 residues: Small ribosomal subunit protein uS4 (202 aa).

Positions 91-168 (SRLSSVLYNS…QKVPDYLEVD (78 aa)) constitute an S4 RNA-binding domain.

It belongs to the universal ribosomal protein uS4 family. In terms of assembly, part of the 30S ribosomal subunit. Contacts protein S5. The interaction surface between S4 and S5 is involved in control of translational fidelity.

Its function is as follows. One of the primary rRNA binding proteins, it binds directly to 16S rRNA where it nucleates assembly of the body of the 30S subunit. With S5 and S12 plays an important role in translational accuracy. The chain is Small ribosomal subunit protein uS4 from Ehrlichia chaffeensis (strain ATCC CRL-10679 / Arkansas).